A 744-amino-acid chain; its full sequence is Scytalone dehydratase-like protein Arp1 (744 aa).

Tyr-621 is a binding site for substrate. Catalysis depends on residues His-656 and His-681. Asn-702 lines the substrate pocket.

Belongs to the scytalone dehydratase family. Homotrimer. Each subunit contains an active site, located in the central part of the hydrophobic core of the monomer, which functions independently.

Its function is as follows. Scytalone dehydratase-like protein; part of the Pks2 gene cluster that mediates the formation of infectious structures (appressoria), enabling these fungi to kill insects faster. The product of the Pks2 gene cluster is different from the one of Pks1 and has still not been identified. The sequence is that of Scytalone dehydratase-like protein Arp1 from Metarhizium brunneum (strain ARSEF 3297).